The chain runs to 316 residues: C1GALT1-specific chaperone 1 (316 aa).

At 1-6 (MLSESS) the chain is on the cytoplasmic side. Residues 7 to 26 (SFLKGVMLGSIFCALITMLG) form a helical; Signal-anchor for type II membrane protein membrane-spanning segment. Residues 27–316 (HIRIGNRMHH…FLPPNGSEND (290 aa)) lie on the Lumenal side of the membrane.

The protein belongs to the glycosyltransferase 31 family. Beta3-Gal-T subfamily. Associates with core 1 beta-3-galactosyltransferase (C1GALT1), probably not with the soluble active form.

It localises to the membrane. Probable chaperone required for the generation of 1 O-glycan Gal-beta1-3GalNAc-alpha1-Ser/Thr (T antigen), which is a precursor for many extended O-glycans in glycoproteins. Probably acts as a specific molecular chaperone assisting the folding/stability of core 1 beta-3-galactosyltransferase (C1GALT1). This chain is C1GALT1-specific chaperone 1 (C1galt1c1), found in Mus musculus (Mouse).